A 484-amino-acid polypeptide reads, in one-letter code: Probable cobyric acid synthase (484 aa).

Residues 247–433 (ELHIQIVKLP…LHGIFHNFAF (187 aa)) form the GATase cobBQ-type domain. The active-site Nucleophile is the Cys325. His425 is a catalytic residue.

The protein belongs to the CobB/CobQ family. CobQ subfamily.

The protein operates within cofactor biosynthesis; adenosylcobalamin biosynthesis. Functionally, catalyzes amidations at positions B, D, E, and G on adenosylcobyrinic A,C-diamide. NH(2) groups are provided by glutamine, and one molecule of ATP is hydrogenolyzed for each amidation. This Thermococcus onnurineus (strain NA1) protein is Probable cobyric acid synthase.